Reading from the N-terminus, the 686-residue chain is Delta-like protein 4 (686 aa).

A signal peptide spans 1-27; that stretch reads MTPGSRSACRWALLLLAVLWPQQRAAG. The Extracellular portion of the chain corresponds to 28-530; sequence SGIFQLRLQE…PVGLPPSFPW (503 aa). 2 disulfides stabilise this stretch: C51-C55 and C62-C75. Residues N79, N109, and N162 are each glycosylated (N-linked (GlcNAc...) asparagine). The region spanning 174-218 is the DSL domain; that stretch reads VVCSDNYYGDSCSRLCKKRDDHFGHYECQPDGSLSCLPGWTGKYC. Residues C176 and C185 are joined by a disulfide bond. 2 interaction with Notch1 regions span residues 186 to 188 and 192 to 196; these read SRL and RDDHF. 26 disulfide bridges follow: C189–C201, C209–C218, C223–C234, C227–C240, C242–C251, C254–C265, C260–C271, C273–C282, C289–C301, C295–C311, C313–C322, C329–C340, C334–C349, C351–C360, C367–C378, C372–C389, C391–C400, C407–C418, C412–C427, C429–C438, C445–C456, C450–C465, C467–C476, C485–C496, C490–C507, and C509–C518. EGF-like domains lie at 219-252, 256-283, 285-323, 325-361, 363-401, 403-439, 441-477, and 481-519; these read DQPI…PLCN, PHNG…LFCD, DLNY…EHCE, ELSK…QHCE, STLT…SNCE, KVDR…THCE, HISD…RRCE, and TNDA…SRCE. Residues 531-551 traverse the membrane as a helical segment; that stretch reads VAVSLGVGLVVLLVLLVMVAV. Topologically, residues 552-686 are cytoplasmic; it reads AVRQLRLRRP…RNECVIATEV (135 aa).

Interacts with NOTCH4. Interacts (via N-terminal DSL and MNNL domains) with NOTCH1 (via EGF-like domains).

It localises to the cell membrane. In terms of biological role, involved in the Notch signaling pathway as Notch ligand. Activates NOTCH1 and NOTCH4. Involved in angiogenesis; negatively regulates endothelial cell proliferation and migration and angiogenic sprouting. Essential for retinal progenitor proliferation. Required for suppressing rod fates in late retinal progenitors as well as for proper generation of other retinal cell types. During spinal cord neurogenesis, inhibits V2a interneuron fate. This Rattus norvegicus (Rat) protein is Delta-like protein 4.